Here is a 150-residue protein sequence, read N- to C-terminus: MSNRVGLASSLKDGQKYMDLWPVRKELNSIFPEQRIIKATRFGVKVMPAIAAISVLTQMVFNNYQAMPQAVVMALFAISLPLQGMWWLGNRSNTKLPPALVSWYRELHEKITETGFALEPMKSRPRYKELAIILNRAFRQLDKSSMERWF.

The next 2 membrane-spanning stretches (helical) occupy residues 42-62 and 70-90; these read FGVK…MVFN and AVVM…WLGN.

The protein belongs to the UPF0208 family.

Its subcellular location is the cell inner membrane. In Vibrio atlanticus (strain LGP32) (Vibrio splendidus (strain Mel32)), this protein is UPF0208 membrane protein VS_0999.